Consider the following 407-residue polypeptide: Phosphopentomutase (407 aa).

Residues aspartate 10, aspartate 306, histidine 311, aspartate 347, histidine 348, and histidine 359 each contribute to the Mn(2+) site.

This sequence belongs to the phosphopentomutase family. Mn(2+) serves as cofactor.

It is found in the cytoplasm. It carries out the reaction 2-deoxy-alpha-D-ribose 1-phosphate = 2-deoxy-D-ribose 5-phosphate. The catalysed reaction is alpha-D-ribose 1-phosphate = D-ribose 5-phosphate. Its pathway is carbohydrate degradation; 2-deoxy-D-ribose 1-phosphate degradation; D-glyceraldehyde 3-phosphate and acetaldehyde from 2-deoxy-alpha-D-ribose 1-phosphate: step 1/2. In terms of biological role, isomerase that catalyzes the conversion of deoxy-ribose 1-phosphate (dRib-1-P) and ribose 1-phosphate (Rib-1-P) to deoxy-ribose 5-phosphate (dRib-5-P) and ribose 5-phosphate (Rib-5-P), respectively. The polypeptide is Phosphopentomutase (Buchnera aphidicola subsp. Acyrthosiphon pisum (strain Tuc7)).